A 366-amino-acid chain; its full sequence is Endophilin-B1 (366 aa).

The segment at 1 to 30 is membrane-binding amphipathic helix; the sequence is MNIMDFNMKKLAADAGTFLSRAVQFTEEKL. The required for membrane binding stretch occupies residues 1–37; it reads MNIMDFNMKKLAADAGTFLSRAVQFTEEKLGQAEKTE. The 235-residue stretch at 27-261 folds into the BAR domain; it reads EEKLGQAEKT…LGSFPSTFLS (235 aa). Coiled coils occupy residues 34 to 54 and 160 to 185; these read EKTE…CTKQ and KERK…AKVA. The SH3 domain maps to 306–366; the sequence is SGSRKARVLY…VPITYLELLN (61 aa).

The protein belongs to the endophilin family. As to quaternary structure, homodimer, and heterodimer with SH3GLB2. Binds BAX. Binds DNM1, HTT, AMPH, BIN1 and ARFGAP1.

It localises to the cytoplasm. The protein resides in the golgi apparatus membrane. Its subcellular location is the mitochondrion outer membrane. May be required for normal outer mitochondrial membrane dynamics. Required for coatomer-mediated retrograde transport in certain cells. May recruit other proteins to membranes with high curvature. May promote membrane fusion. This is Endophilin-B1 from Gallus gallus (Chicken).